Reading from the N-terminus, the 86-residue chain is Large ribosomal subunit protein bL27c (86 aa).

The tract at residues 1-27 (MAHKKGSGSTRNGRDSNSKRLGVKKYG) is disordered.

Belongs to the bacterial ribosomal protein bL27 family.

It localises to the plastid. The protein localises to the chloroplast. The protein is Large ribosomal subunit protein bL27c of Pyropia yezoensis (Susabi-nori).